Reading from the N-terminus, the 198-residue chain is Putative endonuclease segC (198 aa).

The 84-residue stretch at 7 to 90 (KYFYLYSITN…FVKSKKTYNM (84 aa)) folds into the GIY-YIG domain.

It to endonucleases of group I introns of fungi and phage. It depends on Mg(2+) as a cofactor.

Functionally, probably involved in the movement of the endonuclease-encoding DNA. This chain is Putative endonuclease segC (segC), found in Escherichia coli (Bacteriophage T4).